The sequence spans 433 residues: 3-phosphoshikimate 1-carboxyvinyltransferase (433 aa).

The 3-phosphoshikimate site is built by Lys21, Ser22, and Arg26. A phosphoenolpyruvate-binding site is contributed by Lys21. The phosphoenolpyruvate site is built by Gly96 and Arg124. 3-phosphoshikimate-binding residues include Ser167, Ser168, Gln169, Ser195, Asp310, and Lys337. Residue Gln169 coordinates phosphoenolpyruvate. The active-site Proton acceptor is Asp310. Phosphoenolpyruvate-binding residues include Arg341, Arg384, and Lys410.

The protein belongs to the EPSP synthase family. In terms of assembly, monomer.

The protein resides in the cytoplasm. It carries out the reaction 3-phosphoshikimate + phosphoenolpyruvate = 5-O-(1-carboxyvinyl)-3-phosphoshikimate + phosphate. Its pathway is metabolic intermediate biosynthesis; chorismate biosynthesis; chorismate from D-erythrose 4-phosphate and phosphoenolpyruvate: step 6/7. Functionally, catalyzes the transfer of the enolpyruvyl moiety of phosphoenolpyruvate (PEP) to the 5-hydroxyl of shikimate-3-phosphate (S3P) to produce enolpyruvyl shikimate-3-phosphate and inorganic phosphate. This is 3-phosphoshikimate 1-carboxyvinyltransferase from Clostridium botulinum (strain Eklund 17B / Type B).